Here is a 60-residue protein sequence, read N- to C-terminus: Small, acid-soluble spore protein C2 (60 aa).

The protein belongs to the alpha/beta-type SASP family. SASP are degraded in the first minutes of spore germination and provide amino acids for both new protein synthesis and metabolism.

In terms of biological role, SASP are bound to spore DNA. They are double-stranded DNA-binding proteins that cause DNA to change to an a-like conformation. They protect the DNA backbone from chemical and enzymatic cleavage and are thus involved in dormant spore's high resistance to UV light. This chain is Small, acid-soluble spore protein C2 (sspC2), found in Clostridium perfringens (strain 13 / Type A).